A 347-amino-acid chain; its full sequence is 4-hydroxy-2-oxovalerate aldolase 1 (347 aa).

Residues 8 to 261 (VTLYDMSLLX…ETGIDLYKIM (254 aa)) form the Pyruvate carboxyltransferase domain. H20 (proton acceptor) is an active-site residue. S171 and H200 together coordinate substrate. Mn(2+) is bound by residues H200 and H202. Y291 is a substrate binding site.

The protein belongs to the 4-hydroxy-2-oxovalerate aldolase family.

It carries out the reaction (S)-4-hydroxy-2-oxopentanoate = acetaldehyde + pyruvate. This is 4-hydroxy-2-oxovalerate aldolase 1 (salH) from Metapseudomonas furukawaii (Pseudomonas furukawaii).